A 61-amino-acid polypeptide reads, in one-letter code: Disintegrin atroxatin (61 aa).

The region spanning 1–61 is the Disintegrin domain; that stretch reads NPCCDAATCK…ADCPRKGIYG (61 aa). 5 disulfides stabilise this stretch: cysteine 3–cysteine 26, cysteine 9–cysteine 23, cysteine 17–cysteine 23, cysteine 22–cysteine 47, and cysteine 35–cysteine 54. Residues 39–41 carry the Cell attachment site motif; that stretch reads RGD.

This sequence belongs to the venom metalloproteinase (M12B) family. P-II subfamily. P-IIa sub-subfamily. Monomer (disintegrin). Expressed by the venom gland.

The protein localises to the secreted. In terms of biological role, inhibits fibrinogen interaction with platelets. Acts by binding to alpha-IIb/beta-3 (ITGA2B/ITGB3) on the platelet surface and inhibits aggregation induced by ADP, thrombin, platelet-activating factor and collagen. This Crotalus atrox (Western diamondback rattlesnake) protein is Disintegrin atroxatin.